We begin with the raw amino-acid sequence, 467 residues long: Gamma-aminobutyric acid receptor subunit gamma-2 (467 aa).

The N-terminal stretch at 1–39 (MSSPNIWSTGSSVYSTPVFSQKMTVWILLLLSLYPGFTS) is a signal peptide. Residues 40–275 (QKSDDDYEDY…FDLSRRMGYF (236 aa)) are Extracellular-facing. Residues Asn-52 and Asn-129 are each glycosylated (N-linked (GlcNAc...) asparagine). An intrachain disulfide couples Cys-190 to Cys-204. Asn-247 carries an N-linked (GlcNAc...) asparagine glycan. The chain crosses the membrane as a helical span at residues 276–296 (TIQTYIPCTLIVVLSWVSFWI). Residues 297–302 (NKDAVP) are Cytoplasmic-facing. Residues 303 to 322 (ARTSLGITTVLTMTTLSTIA) form a helical membrane-spanning segment. At 323–334 (RKSLPKVSYVTA) the chain is on the extracellular side. Residues 335–359 (MDLFVSVCFIFVFSALVEYGTLHYF) form a helical membrane-spanning segment. At 360 to 443 (VSNRKPSKDK…IHIRIAKMDS (84 aa)) the chain is on the cytoplasmic side. The segment at 425-442 (RTGAWRHGRIHIRIAKMD) is interaction with GABARAP. Residues 444–464 (YARIFFPTAFCLFNLVYWVSY) form a helical membrane-spanning segment. The Extracellular segment spans residues 465-467 (LYL).

Belongs to the ligand-gated ion channel (TC 1.A.9) family. Gamma-aminobutyric acid receptor (TC 1.A.9.5) subfamily. GABRG2 sub-subfamily. As to quaternary structure, heteropentamer, formed by a combination of alpha (GABRA1-6), beta (GABRB1-3), gamma (GABRG1-3), delta (GABRD), epsilon (GABRE), rho (GABRR1-3), pi (GABRP) and theta (GABRQ) chains, each subunit exhibiting distinct physiological and pharmacological properties. Interacts with GABARAP. Interacts with KIF21B. Identified in a complex of 720 kDa composed of LHFPL4, NLGN2, GABRA1, GABRB2, GABRG2 and GABRB3. Interacts with LHFPL4. Interacts with SHISA7; interaction leads to the regulation of GABA(A) receptor trafficking, channel deactivation kinetics and pharmacology. Palmitoylated by ZDHHC3/GODZ; required for the accumulation of GABA(A) receptors at the postsynaptic membrane of inhibitory GABAergic synapses. In terms of processing, glycosylated.

It localises to the postsynaptic cell membrane. The protein resides in the cell membrane. Its subcellular location is the cell projection. The protein localises to the dendrite. It is found in the cytoplasmic vesicle membrane. The enzyme catalyses chloride(in) = chloride(out). With respect to regulation, allosterically activated by benzodiazepines. Activated by pentobarbital. Inhibited by the antagonist bicuculline. Inhibited by zinc ions. Potentiated by histamine. Gamma subunit of the heteropentameric ligand-gated chloride channel gated by gamma-aminobutyric acid (GABA), a major inhibitory neurotransmitter in the brain. GABA-gated chloride channels, also named GABA(A) receptors (GABAAR), consist of five subunits arranged around a central pore and contain GABA active binding site(s) located at the alpha and beta subunit interface(s). When activated by GABA, GABAARs selectively allow the flow of chloride anions across the cell membrane down their electrochemical gradient. Gamma-2/GABRG2-containing GABAARs are found at both synaptic and extrasynaptic sites. Chloride influx into the postsynaptic neuron following GABAAR opening decreases the neuron ability to generate a new action potential, thereby reducing nerve transmission. GABAARs containing alpha-1 and beta-2 or -3 subunits exhibit synaptogenic activity; the gamma-2 subunit being necessary but not sufficient to induce rapid synaptic contacts formation. Extrasynaptic gamma-2-containing receptors contribute to the tonic GABAergic inhibition. GABAARs function also as histamine receptor where histamine binds at the interface of two neighboring beta subunits and potentiates GABA response in a gamma-2 subunit-controlled manner. This Pongo abelii (Sumatran orangutan) protein is Gamma-aminobutyric acid receptor subunit gamma-2 (GABRG2).